We begin with the raw amino-acid sequence, 526 residues long: D-arabinono-1,4-lactone oxidase (526 aa).

Residues 19–193 enclose the FAD-binding PCMH-type domain; sequence YSAKPERYFQ…VSATIRVVPG (175 aa). Residue histidine 56 is modified to Pros-8alpha-FAD histidine.

The protein belongs to the oxygen-dependent FAD-linked oxidoreductase family. In terms of assembly, monomer. FAD serves as cofactor. The N-terminus is blocked.

The protein resides in the mitochondrion membrane. It catalyses the reaction D-arabinono-1,4-lactone + O2 = dehydro-D-arabinono-1,4-lactone + H2O2 + H(+). It participates in cofactor biosynthesis; D-erythroascorbate biosynthesis; dehydro-D-arabinono-1,4-lactone from D-arabinose: step 2/2. Functionally, can oxidize L-gulono-1,4-lactone as well as D-arabinono-1,4-lactone and L-galactono-1,4-lactone. The protein is D-arabinono-1,4-lactone oxidase (ALO1) of Saccharomyces cerevisiae (strain ATCC 204508 / S288c) (Baker's yeast).